The chain runs to 209 residues: Protein Bel-1 (209 aa).

3 disordered regions span residues 1-30 (MASKYPEEGPITEGVEEDFNSHSTSGLDLT), 123-143 (FLNSRKESGTPKTDPTRPATS), and 156-185 (CSRPTPSNSESVCNGLGQPSERGHTSGESG). Polar residues-rich tracts occupy residues 21–30 (SHSTSGLDLT) and 132–143 (TPKTDPTRPATS).

Transcriptional transactivator that activates the viral internal promoter (IP), thereby enhancing its own expression. This transactivation is repressed by nuclear factor I. Also transactivates the long terminal repeat (LTR) promoter, thereby inducing structural gene expression, initiating the late phase of infection. It is therefore a key regulator of viral gene expression. It directly binds to and activates DNA target sites of viral promoters and those of distinct cellular genes. Required for viral replication. This is Protein Bel-1 (bel1) from Felis catus (Cat).